The sequence spans 87 residues: Large ribosomal subunit protein eL31 (87 aa).

Belongs to the eukaryotic ribosomal protein eL31 family.

The sequence is that of Large ribosomal subunit protein eL31 from Methanosphaerula palustris (strain ATCC BAA-1556 / DSM 19958 / E1-9c).